Consider the following 428-residue polypeptide: Adenylosuccinate synthetase (428 aa).

Residues 12–18 and 40–42 contribute to the GTP site; these read GDEGKGK and GHT. The active-site Proton acceptor is Asp-13. Asp-13 and Gly-40 together coordinate Mg(2+). Residues 13–16, 38–41, Thr-128, Arg-142, Gln-223, Thr-238, and Arg-302 each bind IMP; these read DEGK and NAGH. Residue His-41 is the Proton donor of the active site. 298–304 lines the substrate pocket; it reads VTTGRPR. Residues Arg-304, 330 to 332, and 412 to 414 each bind GTP; these read KLD and GTG.

This sequence belongs to the adenylosuccinate synthetase family. As to quaternary structure, homodimer. Mg(2+) is required as a cofactor.

Its subcellular location is the cytoplasm. It catalyses the reaction IMP + L-aspartate + GTP = N(6)-(1,2-dicarboxyethyl)-AMP + GDP + phosphate + 2 H(+). It functions in the pathway purine metabolism; AMP biosynthesis via de novo pathway; AMP from IMP: step 1/2. In terms of biological role, plays an important role in the de novo pathway of purine nucleotide biosynthesis. Catalyzes the first committed step in the biosynthesis of AMP from IMP. This chain is Adenylosuccinate synthetase, found in Bifidobacterium adolescentis (strain ATCC 15703 / DSM 20083 / NCTC 11814 / E194a).